Consider the following 321-residue polypeptide: Cytochrome c biogenesis protein CcsA (321 aa).

8 helical membrane passes run 17–37 (IVSI…IVGL), 44–64 (GMIS…IYSG), 71–91 (LYES…IPYF), 98–118 (LSLV…SGLL), 143–163 (MVLS…LLVI), 225–245 (VISL…VWAN), 258–275 (ETWA…LHTR), and 286–306 (AIVA…VNLL).

The protein belongs to the CcmF/CycK/Ccl1/NrfE/CcsA family. May interact with Ccs1.

The protein localises to the plastid. It localises to the chloroplast thylakoid membrane. Its function is as follows. Required during biogenesis of c-type cytochromes (cytochrome c6 and cytochrome f) at the step of heme attachment. The protein is Cytochrome c biogenesis protein CcsA of Buxus microphylla (Littleleaf boxwood).